We begin with the raw amino-acid sequence, 292 residues long: Elongation factor Ts (292 aa).

The involved in Mg(2+) ion dislocation from EF-Tu stretch occupies residues Thr81–Val84.

This sequence belongs to the EF-Ts family.

The protein resides in the cytoplasm. Its function is as follows. Associates with the EF-Tu.GDP complex and induces the exchange of GDP to GTP. It remains bound to the aminoacyl-tRNA.EF-Tu.GTP complex up to the GTP hydrolysis stage on the ribosome. The sequence is that of Elongation factor Ts from Alkalilimnicola ehrlichii (strain ATCC BAA-1101 / DSM 17681 / MLHE-1).